A 302-amino-acid chain; its full sequence is Acetaldehyde dehydrogenase 1 (302 aa).

12-15 (SGNI) contributes to the NAD(+) binding site. Cys127 functions as the Acyl-thioester intermediate in the catalytic mechanism. NAD(+)-binding positions include 158 to 166 (SAGPGTRAN) and Asn277.

The protein belongs to the acetaldehyde dehydrogenase family.

It carries out the reaction acetaldehyde + NAD(+) + CoA = acetyl-CoA + NADH + H(+). The polypeptide is Acetaldehyde dehydrogenase 1 (Mycobacteroides abscessus (strain ATCC 19977 / DSM 44196 / CCUG 20993 / CIP 104536 / JCM 13569 / NCTC 13031 / TMC 1543 / L948) (Mycobacterium abscessus)).